A 508-amino-acid polypeptide reads, in one-letter code: Serine/threonine protein kinase OSK3 (508 aa).

The Protein kinase domain occupies 17–269; that stretch reads YNLGRTLGIG…IREIREHQWF (253 aa). Residues 23-31 and lysine 46 each bind ATP; that span reads LGIGSFGKV. Residue aspartate 140 is the Proton acceptor of the active site. A UBA domain is found at 290-330; it reads MIDEDTLQDVVNLGYGKDHVCESLRNRLQNEATVAYYLLLD. A KA1 domain is found at 459-507; that stretch reads NGRLPAVIKFEIQLYKTRDEKYLLDMQRVTGPQLLFLDFCADFLTKLRV.

It belongs to the protein kinase superfamily. Ser/Thr protein kinase family. Interacts with HDR1. In terms of tissue distribution, strongly expressed in immature seeds. Mostly expressed in panicles, and to a lower extent, in leaf sheaths.

The protein resides in the nucleus. It catalyses the reaction L-seryl-[protein] + ATP = O-phospho-L-seryl-[protein] + ADP + H(+). The enzyme catalyses L-threonyl-[protein] + ATP = O-phospho-L-threonyl-[protein] + ADP + H(+). This Oryza sativa subsp. indica (Rice) protein is Serine/threonine protein kinase OSK3.